Reading from the N-terminus, the 544-residue chain is Chaperonin GroEL (544 aa).

Residues 29 to 32 (TLGP), 86 to 90 (DGTTT), Gly413, 476 to 478 (NAA), and Asp492 contribute to the ATP site.

The protein belongs to the chaperonin (HSP60) family. Forms a cylinder of 14 subunits composed of two heptameric rings stacked back-to-back. Interacts with the co-chaperonin GroES.

The protein localises to the cytoplasm. It carries out the reaction ATP + H2O + a folded polypeptide = ADP + phosphate + an unfolded polypeptide.. In terms of biological role, together with its co-chaperonin GroES, plays an essential role in assisting protein folding. The GroEL-GroES system forms a nano-cage that allows encapsulation of the non-native substrate proteins and provides a physical environment optimized to promote and accelerate protein folding. This chain is Chaperonin GroEL, found in Halalkalibacterium halodurans (strain ATCC BAA-125 / DSM 18197 / FERM 7344 / JCM 9153 / C-125) (Bacillus halodurans).